Reading from the N-terminus, the 898-residue chain is Vacuolar membrane protease (898 aa).

The Cytoplasmic portion of the chain corresponds to 1–14; that stretch reads MGIVDYLVAAVSFR. A helical transmembrane segment spans residues 15–35; it reads TLPTTFVAVLVYLAIFISVLI. The Vacuolar segment spans residues 36 to 342; it reads TDELPATPKD…LFGQALIVFP (307 aa). Residues asparagine 50, asparagine 103, and asparagine 110 are each glycosylated (N-linked (GlcNAc...) asparagine). Zn(2+) is bound by residues histidine 139 and aspartate 151. The active-site Proton acceptor is glutamate 183. Glutamate 184 contacts Zn(2+). The N-linked (GlcNAc...) asparagine glycan is linked to asparagine 200. The Zn(2+) site is built by glutamate 209 and histidine 284. The chain crosses the membrane as a helical span at residues 343-365; it reads LSAMITFNIVFLVVGPIMLALLV. The Cytoplasmic portion of the chain corresponds to 366–411; it reads TFDIVARHRRQEMIGGGYEEQGFFARAWTSFKSFRWVGGFWKHAKF. Residues 412–432 form a helical membrane-spanning segment; that stretch reads WVALAVTVGLQVLLCVGYLYI. Position 433 (asparagine 433) is a topological domain, vacuolar. Residues 434-454 form a helical membrane-spanning segment; the sequence is PLIAYSSSHIVLLSFLSLAYL. Topologically, residues 455-479 are cytoplasmic; it reads STYLVHNIPSPTDTYGSHLPEQQKQ. A helical membrane pass occupies residues 480–500; the sequence is AALFQLYFFTWILLLAATVVG. Topologically, residues 501–509 are vacuolar; the sequence is AKLSVGSFY. The chain crosses the membrane as a helical span at residues 510–530; sequence ILSLWNAVLFAACAIGSIAGL. At 531–593 the chain is on the cytoplasmic side; the sequence is LSSHTVEGDA…PGGKEGEEVS (63 aa). A helical transmembrane segment spans residues 594–614; the sequence is GAIGWWFVQFVLSVPAVVILV. The Vacuolar segment spans residues 615–635; the sequence is SQLALLMLAATEQTLADGSPA. The helical transmembrane segment at 636–656 threads the bilayer; sequence VTVYGGASLMSVLAILPLAPF. Topologically, residues 657-664 are cytoplasmic; it reads ACKLHRRV. The helical transmembrane segment at 665 to 685 threads the bilayer; the sequence is AYVALVVLIASTAYAWLVFPF. Residues 686 to 898 are Vacuolar-facing; that stretch reads SERAPLKVFF…LVEGYKAFAV (213 aa). N-linked (GlcNAc...) asparagine glycosylation is found at asparagine 704, asparagine 733, and asparagine 764.

This sequence belongs to the peptidase M28 family. Requires Zn(2+) as cofactor.

Its subcellular location is the vacuole membrane. May be involved in vacuolar sorting and osmoregulation. This chain is Vacuolar membrane protease, found in Schizophyllum commune (strain H4-8 / FGSC 9210) (Split gill fungus).